A 90-amino-acid chain; its full sequence is Acylphosphatase (90 aa).

In terms of domain architecture, Acylphosphatase-like spans 4-90; it reads RWRFLIEGSV…TGNDWFDVRT (87 aa). Residues Arg-19 and Asn-37 contribute to the active site.

It belongs to the acylphosphatase family.

The catalysed reaction is an acyl phosphate + H2O = a carboxylate + phosphate + H(+). The protein is Acylphosphatase (acyP) of Synechococcus sp. (strain CC9311).